The primary structure comprises 242 residues: Ubiquinone biosynthesis O-methyltransferase (242 aa).

Residues arginine 44, glycine 64, aspartate 85, and methionine 129 each coordinate S-adenosyl-L-methionine.

This sequence belongs to the methyltransferase superfamily. UbiG/COQ3 family.

The enzyme catalyses a 3-demethylubiquinol + S-adenosyl-L-methionine = a ubiquinol + S-adenosyl-L-homocysteine + H(+). It catalyses the reaction a 3-(all-trans-polyprenyl)benzene-1,2-diol + S-adenosyl-L-methionine = a 2-methoxy-6-(all-trans-polyprenyl)phenol + S-adenosyl-L-homocysteine + H(+). It functions in the pathway cofactor biosynthesis; ubiquinone biosynthesis. Functionally, O-methyltransferase that catalyzes the 2 O-methylation steps in the ubiquinone biosynthetic pathway. This chain is Ubiquinone biosynthesis O-methyltransferase, found in Salmonella paratyphi A (strain ATCC 9150 / SARB42).